Consider the following 190-residue polypeptide: Recombination protein RecR (190 aa).

The C4-type zinc finger occupies Cys58–Cys73. The Toprim domain occupies Asn81 to Pro167.

This sequence belongs to the RecR family.

May play a role in DNA repair. It seems to be involved in an RecBC-independent recombinational process of DNA repair. It may act with RecF and RecO. The polypeptide is Recombination protein RecR (Campylobacter jejuni subsp. jejuni serotype O:6 (strain 81116 / NCTC 11828)).